An 85-amino-acid polypeptide reads, in one-letter code: YcgL domain-containing protein PC1_1941 (85 aa).

The region spanning 1–85 (MFCVIYRSAK…PVENLLNTPV (85 aa)) is the YcgL domain.

The polypeptide is YcgL domain-containing protein PC1_1941 (Pectobacterium carotovorum subsp. carotovorum (strain PC1)).